The primary structure comprises 55 residues: Cortexin domain containing 2 (55 aa).

The chain crosses the membrane as a helical span at residues 16-36; sequence FAIAFVVLLFLFLIVMIFRCA.

The protein resides in the membrane. The protein is Cortexin domain containing 2 of Homo sapiens (Human).